Consider the following 552-residue polypeptide: Cytochrome c oxidase subunit 1 (552 aa).

Residues 35–55 (VIGIQYLVTAFIFYLIGGLMA) form a helical membrane-spanning segment. Position 82 (His-82) interacts with Fe(II)-heme a. Helical transmembrane passes span 85–105 (IMIF…YLVP), 120–140 (ALAF…FLFG), 164–184 (WILA…NFIV), 211–231 (LLAL…LFDI), 252–272 (LFWF…FGIM), and 284–304 (IFGY…GLFV). Cu cation-binding residues include His-258 and Tyr-262. The 1'-histidyl-3'-tyrosine (His-Tyr) cross-link spans 258–262 (HPAVY). Positions 307 and 308 each coordinate Cu cation. 5 helical membrane-spanning segments follow: residues 321–341 (FFTI…FSWV), 355–375 (MLFA…GVTL), 390–410 (VVAH…YAGI), 426–446 (LGIL…LPMH), and 470–490 (ICTI…INII). Residue His-393 participates in heme a3 binding. A Fe(II)-heme a-binding site is contributed by His-395.

Belongs to the heme-copper respiratory oxidase family. Cu(2+) serves as cofactor. Requires heme as cofactor.

The protein localises to the cell membrane. It catalyses the reaction 4 Fe(II)-[cytochrome c] + O2 + 8 H(+)(in) = 4 Fe(III)-[cytochrome c] + 2 H2O + 4 H(+)(out). It participates in energy metabolism; oxidative phosphorylation. In terms of biological role, cytochrome c oxidase is the component of the respiratory chain that catalyzes the reduction of oxygen to water. Subunits 1-3 form the functional core of the enzyme complex. CO I is the catalytic subunit of the enzyme. Electrons originating in cytochrome c are transferred via the copper A center of subunit 2 and heme A of subunit 1 to the bimetallic center formed by heme A3 and copper B. This is Cytochrome c oxidase subunit 1 (ctaD) from Thermostichus vulcanus (Synechococcus vulcanus).